A 157-amino-acid polypeptide reads, in one-letter code: Major allergen Alt a 1 (157 aa).

The signal sequence occupies residues 1 to 18; the sequence is MQFTTIASLFAAAGLAAA. One can recognise an AA1-like domain in the interval 35 to 153; sequence EGDYVWKISE…ADAYITLVTL (119 aa). 2 cysteine pairs are disulfide-bonded: Cys-74/Cys-89 and Cys-128/Cys-140.

Belongs to the ALTA1 family. Homodimer; disulfide-linked.

It is found in the spore wall. The protein localises to the secreted. May bind and inhibit the beta-glucanase activity of host plant thaumatin-like proteins. The sequence is that of Major allergen Alt a 1 (ALTA1) from Alternaria alternata (Alternaria rot fungus).